Reading from the N-terminus, the 141-residue chain is Nucleoside diphosphate kinase (141 aa).

ATP contacts are provided by lysine 9, phenylalanine 57, arginine 85, threonine 91, arginine 102, and asparagine 112. Residue histidine 115 is the Pros-phosphohistidine intermediate of the active site.

Belongs to the NDK family. As to quaternary structure, homotetramer. Requires Mg(2+) as cofactor.

It is found in the cytoplasm. The catalysed reaction is a 2'-deoxyribonucleoside 5'-diphosphate + ATP = a 2'-deoxyribonucleoside 5'-triphosphate + ADP. The enzyme catalyses a ribonucleoside 5'-diphosphate + ATP = a ribonucleoside 5'-triphosphate + ADP. Major role in the synthesis of nucleoside triphosphates other than ATP. The ATP gamma phosphate is transferred to the NDP beta phosphate via a ping-pong mechanism, using a phosphorylated active-site intermediate. This chain is Nucleoside diphosphate kinase, found in Prosthecochloris aestuarii (strain DSM 271 / SK 413).